Consider the following 387-residue polypeptide: Short-chain dehydrogenase/reductase family 42E member 1 (387 aa).

Residue tyrosine 149 is the Proton acceptor of the active site. An NAD(+)-binding site is contributed by lysine 153. Transmembrane regions (helical) follow at residues 279–299 (LPISMIYFFAFLTEMVHFVVG) and 365–385 (ILDVFVVVAFVAVLLSCLPVV).

This sequence belongs to the 3-beta-HSD family.

The protein localises to the membrane. The polypeptide is Short-chain dehydrogenase/reductase family 42E member 1 (sdr42e1) (Danio rerio (Zebrafish)).